The sequence spans 463 residues: NADH dehydrogenase [ubiquinone] iron-sulfur protein 2, mitochondrial (463 aa).

A mitochondrion-targeting transit peptide spans 1–33 (MAALRALGGLRGVAAQVLRPGAGVRLPIQPSRG). Lysine 62 bears the N6-acetyllysine mark. Symmetric dimethylarginine is present on arginine 118. [4Fe-4S] cluster is bound by residues cysteine 326, cysteine 332, and cysteine 347.

It belongs to the complex I 49 kDa subunit family. Core subunit of respiratory chain NADH dehydrogenase (Complex I) which is composed of 45 different subunits. Component of the iron-sulfur (IP) fragment of the enzyme. Interacts with NDUFAF3. Interacts with NDUFAF7. Interacts with CERS2. It depends on [4Fe-4S] cluster as a cofactor. Post-translationally, dimethylation at Arg-118 by NDUFAF7 takes place after NDUFS2 assembles into the complex I, leading to stabilize the early intermediate complex.

It is found in the mitochondrion inner membrane. It carries out the reaction a ubiquinone + NADH + 5 H(+)(in) = a ubiquinol + NAD(+) + 4 H(+)(out). In terms of biological role, core subunit of the mitochondrial membrane respiratory chain NADH dehydrogenase (Complex I) which catalyzes electron transfer from NADH through the respiratory chain, using ubiquinone as an electron acceptor. Essential for the catalytic activity and assembly of complex I. Redox-sensitive, critical component of the oxygen-sensing pathway in the pulmonary vasculature which plays a key role in acute pulmonary oxygen-sensing and hypoxic pulmonary vasoconstriction. Plays an important role in carotid body sensing of hypoxia. Essential for glia-like neural stem and progenitor cell proliferation, differentiation and subsequent oligodendrocyte or neuronal maturation. The polypeptide is NADH dehydrogenase [ubiquinone] iron-sulfur protein 2, mitochondrial (NDUFS2) (Pongo pygmaeus (Bornean orangutan)).